Reading from the N-terminus, the 543-residue chain is Chaperonin GroEL 1 (543 aa).

ATP-binding positions include 29–32, 86–90, glycine 413, 479–481, and aspartate 495; these read TLGP, DGTTT, and NAA. The interval 524–543 is disordered; sequence PEPKDAAPAGVGGGGGDFDY. Residues 533–543 show a composition bias toward gly residues; that stretch reads GVGGGGGDFDY.

Belongs to the chaperonin (HSP60) family. In terms of assembly, forms a cylinder of 14 subunits composed of two heptameric rings stacked back-to-back. Interacts with the co-chaperonin GroES.

The protein resides in the cytoplasm. It catalyses the reaction ATP + H2O + a folded polypeptide = ADP + phosphate + an unfolded polypeptide.. In terms of biological role, together with its co-chaperonin GroES, plays an essential role in assisting protein folding. The GroEL-GroES system forms a nano-cage that allows encapsulation of the non-native substrate proteins and provides a physical environment optimized to promote and accelerate protein folding. The protein is Chaperonin GroEL 1 of Anabaena sp. (strain L31).